Here is a 256-residue protein sequence, read N- to C-terminus: MGYLKRFALYISVMILIFAIAGCGKGNETKEDSKEEQIKKSFAKTLDMYPIKNLEDLYDKEGYRDGEFKKGDKGMWTIYTDFAKGNKSDELDDEGMVLNLDRNTRTAKGYYFVKKFYEKDKLPDRKNYKVEMKNNKIILLDKVEDPNLKKRIENFKFFGQYANFKDLENYNNGDVSINWNVPSYDVEYKMSNKDENVKQLRSRYNIPTDKAPMLKMHIDGDLKGSSVGYKRLEIDFSKEGRDISVIDYLSYKPAKK.

An N-terminal signal peptide occupies residues 1–22 (MGYLKRFALYISVMILIFAIAG). Residue cysteine 23 is the site of N-palmitoyl cysteine attachment. A lipid anchor (S-diacylglycerol cysteine) is attached at cysteine 23.

This sequence belongs to the staphylococcal tandem lipoprotein family.

It is found in the cell membrane. This is an uncharacterized protein from Staphylococcus aureus (strain COL).